Reading from the N-terminus, the 314-residue chain is NF-kappa-B inhibitor alpha (314 aa).

A disordered region spans residues 1-40 (MFQPAGHGQDWAMEGPRDGLKKERLVDDRHDSGLDSMKDE). A compositionally biased stretch (basic and acidic residues) spans 15–40 (GPRDGLKKERLVDDRHDSGLDSMKDE). Residue Lys21 forms a Glycyl lysine isopeptide (Lys-Gly) (interchain with G-Cter in SUMO); alternate linkage. A Glycyl lysine isopeptide (Lys-Gly) (interchain with G-Cter in ubiquitin); alternate cross-link involves residue Lys21. Lys22 participates in a covalent cross-link: Glycyl lysine isopeptide (Lys-Gly) (interchain with G-Cter in ubiquitin). The Destruction motif motif lies at 30–36 (HDSGLDS). Ser32 bears the Phosphoserine; by IKKB mark. The residue at position 36 (Ser36) is a Phosphoserine; by IKKA, IKKB, IKKE and TBK1. Tyr42 carries the post-translational modification Phosphotyrosine. Residues 45 to 54 (MVKELREIRL) carry the Nuclear export signal motif. ANK repeat units follow at residues 73-103 (DGDS…DLAF), 110-139 (LQQT…DPEL), 143-172 (RGNT…PQHL), 182-211 (NGHT…DVNA), and 216-245 (NGRT…DVNR). The Nuclear import signal motif lies at 110–120 (LQQTPLHLAVI). A (3S)-3-hydroxyasparagine; by HIF1AN mark is found at Asn210 and Asn244. Ser283 and Ser288 each carry phosphoserine; by CK2. Thr291 is subject to Phosphothreonine; by CK2. Ser293 carries the phosphoserine; by CK2 modification. Thr296 carries the post-translational modification Phosphothreonine.

The protein belongs to the NF-kappa-B inhibitor family. Interacts with RELA; the interaction requires the nuclear import signal. Part of a 70-90 kDa complex at least consisting of CHUK, IKBKB, NFKBIA, RELA, ELP1 and MAP3K14. Interacts with NKIRAS1 and NKIRAS2. Interacts with RWDD3; the interaction enhances sumoylation. Interacts with PRMT2. Interacts with PRKACA in platelets; this interaction is disrupted by thrombin and collagen. Interacts with MEFV. Interacts with DDRGK1; positively regulates NFKBIA phosphorylation and degradation. Interacts with HNRNPA2B1; the interaction may be mediated by the RRM2 domain of HNRNPA2B1, and HNRNPA2B1 may interact simultaneously with FAM76B and either NFKBIA or NFKBIE to form a complex. Phosphorylated at Ser-32 and Ser-36 by IKKA/CHUK and IKKB/IKBKB; disables inhibition of NF-kappa-B DNA-binding activity. Phosphorylation at positions 32 and 36 is prerequisite to recognition by the SCF(FBXW11) and SCF(BTRC) complexes, leading to polyubiquitination and subsequent degradation. Post-translationally, polyubiquitinated at Lys-21 and/or Lys-22 following phosphorylation at Ser-32 and Ser-36. Monoubiquitinated at Lys-21 and/or Lys-22 by UBE2D3. Ubiquitin chain elongation is then performed by CDC34 in cooperation with the SCF(FBXW11) E3 ligase complex, building ubiquitin chains from the UBE2D3-primed NFKBIA-linked ubiquitin. The resulting polyubiquitination leads to protein degradation. Also ubiquitinated by the SCF(BTRC) complex following stimulus-dependent phosphorylation at Ser-32 and Ser-36. Deubiquitinated by USP38, leading to NF-kappa-B inhibition. In terms of processing, sumoylated; sumoylation requires the presence of the nuclear import signal. Sumoylation blocks ubiquitination and proteasome-mediated degradation of the protein thereby increasing the protein stability. Hydroxylated by HIF1AN. As to expression, highly expressed in lymph node, thymus followed by liver, brain, muscle, kidney, gastrointestinal and reproductive tract.

The protein resides in the cytoplasm. Its subcellular location is the nucleus. Functionally, inhibits the activity of dimeric NF-kappa-B/REL complexes by trapping REL (RELA/p65 and NFKB1/p50) dimers in the cytoplasm by masking their nuclear localization signals. On cellular stimulation by immune and pro-inflammatory responses, becomes phosphorylated promoting ubiquitination and degradation, enabling the dimeric RELA to translocate to the nucleus and activate transcription. This Mus musculus (Mouse) protein is NF-kappa-B inhibitor alpha (Nfkbia).